The sequence spans 399 residues: NADH-quinone oxidoreductase subunit D 2 (399 aa).

The interval 1-20 (MIASKESNSAATPATSAPTL) is disordered. Over residues 9-20 (SAATPATSAPTL) the composition is skewed to low complexity.

It belongs to the complex I 49 kDa subunit family. As to quaternary structure, NDH-1 is composed of 14 different subunits. Subunits NuoB, C, D, E, F, and G constitute the peripheral sector of the complex.

The protein localises to the cell inner membrane. It catalyses the reaction a quinone + NADH + 5 H(+)(in) = a quinol + NAD(+) + 4 H(+)(out). NDH-1 shuttles electrons from NADH, via FMN and iron-sulfur (Fe-S) centers, to quinones in the respiratory chain. The immediate electron acceptor for the enzyme in this species is believed to be ubiquinone. Couples the redox reaction to proton translocation (for every two electrons transferred, four hydrogen ions are translocated across the cytoplasmic membrane), and thus conserves the redox energy in a proton gradient. The sequence is that of NADH-quinone oxidoreductase subunit D 2 from Opitutus terrae (strain DSM 11246 / JCM 15787 / PB90-1).